Here is a 227-residue protein sequence, read N- to C-terminus: Heptaprenylglyceryl phosphate synthase (227 aa).

K13 provides a ligand contact to sn-glycerol 1-phosphate. Residues D15 and T41 each contribute to the Mg(2+) site. Residues 159-164 (YLEYSG), G189, and 209-210 (GN) each bind sn-glycerol 1-phosphate.

This sequence belongs to the GGGP/HepGP synthase family. Group I subfamily. Homodimer. Requires Mg(2+) as cofactor.

It carries out the reaction sn-glycerol 1-phosphate + all-trans-heptaprenyl diphosphate = 3-heptaprenyl-sn-glycero-1-phosphate + diphosphate. It functions in the pathway membrane lipid metabolism; glycerophospholipid metabolism. Prenyltransferase that catalyzes in vivo the transfer of the heptaprenyl moiety of heptaprenyl pyrophosphate (HepPP; 35 carbon atoms) to the C3 hydroxyl of sn-glycerol-1-phosphate (G1P), producing heptaprenylglyceryl phosphate (HepGP). This reaction is an ether-bond-formation step in the biosynthesis of archaea-type G1P-based membrane lipids found in Bacillales. The polypeptide is Heptaprenylglyceryl phosphate synthase (Exiguobacterium sibiricum (strain DSM 17290 / CCUG 55495 / CIP 109462 / JCM 13490 / 255-15)).